The primary structure comprises 232 residues: Large ribosomal subunit protein uL1 (232 aa).

This sequence belongs to the universal ribosomal protein uL1 family. As to quaternary structure, part of the 50S ribosomal subunit.

Binds directly to 23S rRNA. The L1 stalk is quite mobile in the ribosome, and is involved in E site tRNA release. In terms of biological role, protein L1 is also a translational repressor protein, it controls the translation of the L11 operon by binding to its mRNA. This Jannaschia sp. (strain CCS1) protein is Large ribosomal subunit protein uL1.